The primary structure comprises 408 residues: AA9 family lytic polysaccharide monooxygenase A (408 aa).

An N-terminal signal peptide occupies residues 1–20 (MKTTTYSLLALAAASKLASA). Cu(2+) contacts are provided by His21 and His103. Cys63 and Cys186 are oxidised to a cystine. The N-linked (GlcNAc...) asparagine glycan is linked to Asn151. His172 provides a ligand contact to O2. A Cu(2+)-binding site is contributed by Tyr183. Residues Asn331 and Asn381 are each glycosylated (N-linked (GlcNAc...) asparagine). The region spanning 369–405 (GVAKQYERCGGINHTGPTTCESGSVCKKWNPYYYQCV) is the CBM1 domain.

It belongs to the polysaccharide monooxygenase AA9 family. The cofactor is Cu(2+).

The protein resides in the secreted. The catalysed reaction is [(1-&gt;4)-beta-D-glucosyl]n+m + reduced acceptor + O2 = 4-dehydro-beta-D-glucosyl-[(1-&gt;4)-beta-D-glucosyl]n-1 + [(1-&gt;4)-beta-D-glucosyl]m + acceptor + H2O.. Its function is as follows. Lytic polysaccharide monooxygenase (LPMO) that depolymerizes crystalline and amorphous polysaccharides via the oxidation of scissile alpha- or beta-(1-4)-glycosidic bonds, yielding C4 oxidation products. Catalysis by LPMOs requires the reduction of the active-site copper from Cu(II) to Cu(I) by a reducing agent and H(2)O(2) or O(2) as a cosubstrate. This chain is AA9 family lytic polysaccharide monooxygenase A (eglD), found in Aspergillus kawachii (strain NBRC 4308) (White koji mold).